A 404-amino-acid chain; its full sequence is CCA-adding enzyme (404 aa).

Residues Gly27 and Arg30 each coordinate ATP. Gly27 and Arg30 together coordinate CTP. Mg(2+)-binding residues include Asp40 and Asp42. Residues Arg111, Asp154, Arg157, Arg160, and Arg163 each coordinate ATP. CTP contacts are provided by Arg111, Asp154, Arg157, Arg160, and Arg163.

Belongs to the tRNA nucleotidyltransferase/poly(A) polymerase family. Bacterial CCA-adding enzyme type 3 subfamily. In terms of assembly, homodimer. Mg(2+) serves as cofactor.

The enzyme catalyses a tRNA precursor + 2 CTP + ATP = a tRNA with a 3' CCA end + 3 diphosphate. The catalysed reaction is a tRNA with a 3' CCA end + 2 CTP + ATP = a tRNA with a 3' CCACCA end + 3 diphosphate. Its function is as follows. Catalyzes the addition and repair of the essential 3'-terminal CCA sequence in tRNAs without using a nucleic acid template. Adds these three nucleotides in the order of C, C, and A to the tRNA nucleotide-73, using CTP and ATP as substrates and producing inorganic pyrophosphate. tRNA 3'-terminal CCA addition is required both for tRNA processing and repair. Also involved in tRNA surveillance by mediating tandem CCA addition to generate a CCACCA at the 3' terminus of unstable tRNAs. While stable tRNAs receive only 3'-terminal CCA, unstable tRNAs are marked with CCACCA and rapidly degraded. The structural flexibility of RNA controls the choice between CCA versus CCACCA addition: following the first CCA addition cycle, nucleotide-binding to the active site triggers a clockwise screw motion, producing torque on the RNA. This ejects stable RNAs, whereas unstable RNAs are refolded while bound to the enzyme and subjected to a second CCA catalytic cycle. The protein is CCA-adding enzyme of Geobacillus stearothermophilus (Bacillus stearothermophilus).